The following is a 166-amino-acid chain: Transcription antitermination protein NusB (166 aa).

This sequence belongs to the NusB family.

Involved in transcription antitermination. Required for transcription of ribosomal RNA (rRNA) genes. Binds specifically to the boxA antiterminator sequence of the ribosomal RNA (rrn) operons. The sequence is that of Transcription antitermination protein NusB from Chromohalobacter salexigens (strain ATCC BAA-138 / DSM 3043 / CIP 106854 / NCIMB 13768 / 1H11).